Reading from the N-terminus, the 302-residue chain is ATP synthase gamma chain (302 aa).

This sequence belongs to the ATPase gamma chain family. F-type ATPases have 2 components, CF(1) - the catalytic core - and CF(0) - the membrane proton channel. CF(1) has five subunits: alpha(3), beta(3), gamma(1), delta(1), epsilon(1). CF(0) has three main subunits: a, b and c.

It localises to the cell membrane. Produces ATP from ADP in the presence of a proton gradient across the membrane. The gamma chain is believed to be important in regulating ATPase activity and the flow of protons through the CF(0) complex. The protein is ATP synthase gamma chain of Leuconostoc citreum (strain KM20).